We begin with the raw amino-acid sequence, 144 residues long: Gonadotropin subunit beta-2 (144 aa).

Positions 1–27 (MGTPVKILVVRNHILFSVVVLLAVAQS) are cleaved as a signal peptide. 6 disulfides stabilise this stretch: Cys33-Cys81, Cys47-Cys96, Cys50-Cys134, Cys58-Cys112, Cys62-Cys114, and Cys117-Cys124. A glycan (N-linked (GlcNAc...) asparagine) is linked at Asn37. The propeptide occupies 143–144 (VY).

This sequence belongs to the glycoprotein hormones subunit beta family. In terms of assembly, heterodimer of an alpha and a beta chain.

It is found in the secreted. Functionally, involved in gametogenesis and steroidogenesis. This Cyprinus carpio (Common carp) protein is Gonadotropin subunit beta-2 (cgbb).